The following is a 156-amino-acid chain: Cytochrome c-type biogenesis protein CcmE 1 (156 aa).

Topologically, residues 1 to 8 are cytoplasmic; it reads MNATRKQR. A helical; Signal-anchor for type II membrane protein transmembrane segment spans residues 9-29; the sequence is LCLVIGVLAAAALAVTLIVFA. Topologically, residues 30 to 156 are periplasmic; the sequence is LQRNMSYLFT…ATAAPLTTPR (127 aa). The heme site is built by His123 and Tyr127.

This sequence belongs to the CcmE/CycJ family.

The protein localises to the cell inner membrane. Its function is as follows. Heme chaperone required for the biogenesis of c-type cytochromes. Transiently binds heme delivered by CcmC and transfers the heme to apo-cytochromes in a process facilitated by CcmF and CcmH. This Xanthomonas oryzae pv. oryzae (strain MAFF 311018) protein is Cytochrome c-type biogenesis protein CcmE 1.